We begin with the raw amino-acid sequence, 522 residues long: 4-chlorobenzoate--CoA ligase (522 aa).

Residues 161 to 169 (TSGTTGLPK), 300 to 305 (DIYGTT), and N410 each bind ATP.

It belongs to the ATP-dependent AMP-binding enzyme family. In terms of assembly, homodimer. The cofactor is Mg(2+).

The enzyme catalyses 4-chlorobenzoate + ATP + CoA = 4-chlorobenzoyl-CoA + AMP + diphosphate. Its pathway is xenobiotic degradation; 4-chlorobenzoate degradation; 4-hydroxybenzoate from 4-chlorobenzoate: step 2/3. Its function is as follows. Catalyzes the formation of chlorobenzoyl-CoA via a 2 step reaction. First 4-chlorobenzoate is adenylated by ATP, followed by acyl transfer from the 4-chlorobenzoyl-AMP intermediate to CoA. Benzoate, 4-bromobenzoate, 4-iodobenzoate and 4-fluorobenzoate also act as substrates. Inactive towards 4-nitrobenzoate. The protein is 4-chlorobenzoate--CoA ligase of Arthrobacter sp.